The primary structure comprises 355 residues: UDP-3-O-acylglucosamine N-acyltransferase (355 aa).

H252 functions as the Proton acceptor in the catalytic mechanism.

It belongs to the transferase hexapeptide repeat family. LpxD subfamily. In terms of assembly, homotrimer.

It carries out the reaction a UDP-3-O-[(3R)-3-hydroxyacyl]-alpha-D-glucosamine + a (3R)-hydroxyacyl-[ACP] = a UDP-2-N,3-O-bis[(3R)-3-hydroxyacyl]-alpha-D-glucosamine + holo-[ACP] + H(+). The protein operates within bacterial outer membrane biogenesis; LPS lipid A biosynthesis. Functionally, catalyzes the N-acylation of UDP-3-O-acylglucosamine using 3-hydroxyacyl-ACP as the acyl donor. Is involved in the biosynthesis of lipid A, a phosphorylated glycolipid that anchors the lipopolysaccharide to the outer membrane of the cell. This is UDP-3-O-acylglucosamine N-acyltransferase from Polynucleobacter necessarius subsp. necessarius (strain STIR1).